We begin with the raw amino-acid sequence, 1393 residues long: DNA-directed RNA polymerase subunit beta'' (1393 aa).

Cys-220, Cys-291, Cys-298, and Cys-301 together coordinate Zn(2+).

This sequence belongs to the RNA polymerase beta' chain family. RpoC2 subfamily. As to quaternary structure, in plastids the minimal PEP RNA polymerase catalytic core is composed of four subunits: alpha, beta, beta', and beta''. When a (nuclear-encoded) sigma factor is associated with the core the holoenzyme is formed, which can initiate transcription. It depends on Zn(2+) as a cofactor.

It is found in the plastid. It localises to the chloroplast. The enzyme catalyses RNA(n) + a ribonucleoside 5'-triphosphate = RNA(n+1) + diphosphate. In terms of biological role, DNA-dependent RNA polymerase catalyzes the transcription of DNA into RNA using the four ribonucleoside triphosphates as substrates. In Gossypium hirsutum (Upland cotton), this protein is DNA-directed RNA polymerase subunit beta''.